A 99-amino-acid chain; its full sequence is Large ribosomal subunit protein bL28 (99 aa).

This sequence belongs to the bacterial ribosomal protein bL28 family.

The protein is Large ribosomal subunit protein bL28 of Rhodospirillum rubrum (strain ATCC 11170 / ATH 1.1.1 / DSM 467 / LMG 4362 / NCIMB 8255 / S1).